The chain runs to 481 residues: Cerebral cavernous malformations 2 protein-like (481 aa).

2 disordered regions span residues 161-193 (PVPA…GTAE) and 214-290 (EARA…DPQN). A compositionally biased stretch (basic and acidic residues) spans 184 to 193 (PEKRRVGTAE). Positions 214–223 (EARAAGGGGS) are enriched in gly residues. Residues 237–251 (WERRQTFSGSWERRH) show a composition bias toward basic and acidic residues.

It belongs to the CCM2 family.

The sequence is that of Cerebral cavernous malformations 2 protein-like (Ccm2l) from Mus musculus (Mouse).